The sequence spans 55 residues: MPQLNPSPWFAIMVFSWFVFLIFLPPKIMAHTFPNEPTAQSTQTLKTKSWTWPWH.

Residues 9-29 (WFAIMVFSWFVFLIFLPPKIM) traverse the membrane as a helical segment.

This sequence belongs to the ATPase protein 8 family. In terms of assembly, component of the ATP synthase complex composed at least of ATP5F1A/subunit alpha, ATP5F1B/subunit beta, ATP5MC1/subunit c (homooctomer), MT-ATP6/subunit a, MT-ATP8/subunit 8, ATP5ME/subunit e, ATP5MF/subunit f, ATP5MG/subunit g, ATP5MK/subunit k, ATP5MJ/subunit j, ATP5F1C/subunit gamma, ATP5F1D/subunit delta, ATP5F1E/subunit epsilon, ATP5PF/subunit F6, ATP5PB/subunit b, ATP5PD/subunit d, ATP5PO/subunit OSCP. ATP synthase complex consists of a soluble F(1) head domain (subunits alpha(3) and beta(3)) - the catalytic core - and a membrane F(0) domain - the membrane proton channel (subunits c, a, 8, e, f, g, k and j). These two domains are linked by a central stalk (subunits gamma, delta, and epsilon) rotating inside the F1 region and a stationary peripheral stalk (subunits F6, b, d, and OSCP).

The protein localises to the mitochondrion membrane. In terms of biological role, subunit 8, of the mitochondrial membrane ATP synthase complex (F(1)F(0) ATP synthase or Complex V) that produces ATP from ADP in the presence of a proton gradient across the membrane which is generated by electron transport complexes of the respiratory chain. ATP synthase complex consist of a soluble F(1) head domain - the catalytic core - and a membrane F(1) domain - the membrane proton channel. These two domains are linked by a central stalk rotating inside the F(1) region and a stationary peripheral stalk. During catalysis, ATP synthesis in the catalytic domain of F(1) is coupled via a rotary mechanism of the central stalk subunits to proton translocation. In vivo, can only synthesize ATP although its ATP hydrolase activity can be activated artificially in vitro. Part of the complex F(0) domain. This chain is ATP synthase F(0) complex subunit 8, found in Tetraodon nigroviridis (Spotted green pufferfish).